A 399-amino-acid chain; its full sequence is Bifunctional enzyme IspD/IspF (399 aa).

Residues 1 to 239 (MHTWALLLAA…SSEKKNMQVP (239 aa)) form a 2-C-methyl-D-erythritol 4-phosphate cytidylyltransferase region. The 2-C-methyl-D-erythritol 2,4-cyclodiphosphate synthase stretch occupies residues 240 to 399 (CVGWGYDVHR…AVTALRRVSS (160 aa)). Residues D246 and H248 each contribute to the a divalent metal cation site. 4-CDP-2-C-methyl-D-erythritol 2-phosphate-binding positions include 246–248 (DVH) and 273–274 (HS). H281 is a binding site for a divalent metal cation. 4-CDP-2-C-methyl-D-erythritol 2-phosphate contacts are provided by residues 295-297 (DIG), 300-304 (FPDTD), 371-374 (TTEE), and F378.

In the N-terminal section; belongs to the IspD/TarI cytidylyltransferase family. IspD subfamily. It in the C-terminal section; belongs to the IspF family. The cofactor is a divalent metal cation.

The catalysed reaction is 2-C-methyl-D-erythritol 4-phosphate + CTP + H(+) = 4-CDP-2-C-methyl-D-erythritol + diphosphate. It catalyses the reaction 4-CDP-2-C-methyl-D-erythritol 2-phosphate = 2-C-methyl-D-erythritol 2,4-cyclic diphosphate + CMP. It participates in isoprenoid biosynthesis; isopentenyl diphosphate biosynthesis via DXP pathway; isopentenyl diphosphate from 1-deoxy-D-xylulose 5-phosphate: step 2/6. Its pathway is isoprenoid biosynthesis; isopentenyl diphosphate biosynthesis via DXP pathway; isopentenyl diphosphate from 1-deoxy-D-xylulose 5-phosphate: step 4/6. In terms of biological role, bifunctional enzyme that catalyzes the formation of 4-diphosphocytidyl-2-C-methyl-D-erythritol from CTP and 2-C-methyl-D-erythritol 4-phosphate (MEP) (IspD), and catalyzes the conversion of 4-diphosphocytidyl-2-C-methyl-D-erythritol 2-phosphate (CDP-ME2P) to 2-C-methyl-D-erythritol 2,4-cyclodiphosphate (ME-CPP) with a corresponding release of cytidine 5-monophosphate (CMP) (IspF). The sequence is that of Bifunctional enzyme IspD/IspF from Oleidesulfovibrio alaskensis (strain ATCC BAA-1058 / DSM 17464 / G20) (Desulfovibrio alaskensis).